A 174-amino-acid chain; its full sequence is ATP-dependent protease subunit HslV (174 aa).

Thr-2 is a catalytic residue. The Na(+) site is built by Gly-157, Cys-160, and Thr-163.

The protein belongs to the peptidase T1B family. HslV subfamily. A double ring-shaped homohexamer of HslV is capped on each side by a ring-shaped HslU homohexamer. The assembly of the HslU/HslV complex is dependent on binding of ATP.

The protein resides in the cytoplasm. The enzyme catalyses ATP-dependent cleavage of peptide bonds with broad specificity.. Its activity is regulated as follows. Allosterically activated by HslU binding. Protease subunit of a proteasome-like degradation complex believed to be a general protein degrading machinery. This Shewanella loihica (strain ATCC BAA-1088 / PV-4) protein is ATP-dependent protease subunit HslV.